Reading from the N-terminus, the 197-residue chain is Dephospho-CoA kinase (197 aa).

The DPCK domain occupies 4–197 (RLGLTGSIGM…RQIRAGNIHA (194 aa)). 12–17 (GMGKST) lines the ATP pocket.

It belongs to the CoaE family.

It localises to the cytoplasm. The enzyme catalyses 3'-dephospho-CoA + ATP = ADP + CoA + H(+). It functions in the pathway cofactor biosynthesis; coenzyme A biosynthesis; CoA from (R)-pantothenate: step 5/5. Catalyzes the phosphorylation of the 3'-hydroxyl group of dephosphocoenzyme A to form coenzyme A. This is Dephospho-CoA kinase from Ruegeria pomeroyi (strain ATCC 700808 / DSM 15171 / DSS-3) (Silicibacter pomeroyi).